Reading from the N-terminus, the 31-residue chain is U13-ctenitoxin-Pn1b (31 aa).

3 disulfide bridges follow: C3/C17, C10/C21, and C16/C30.

In terms of tissue distribution, expressed by the venom gland.

The protein localises to the secreted. In terms of biological role, acts as a neurotoxin. The polypeptide is U13-ctenitoxin-Pn1b (Phoneutria nigriventer (Brazilian armed spider)).